Here is a 382-residue protein sequence, read N- to C-terminus: MIPRPHGGKLVNRIVSSKRRTALLKETHELPSIEISYERLIDLLDIANGAFSPLEGFMVQEDYLHVLYDMRLSNDLPWTIPVILDVDPEEISNVKEGDDIALKYKDEIYAIMRVEEIYGWDKKEYARQVYKTTDPNHPGVAKTYQRKELLLGGTIDLLNQPHHPLEHRILWPIETRVLFREKKWRTIVAFQTRNVPHRGHEYVQKAALTFTDGLFIHPLIGWKKPGDYRDEVIFAAYEALIKHYYPDNVVVLAGLMMNMNYAGPREAVHHAIVRKNFGATHFIVGRDHAGVGDYYKPYEAWEIFDEFPDLGITPLFIREAFYCKKCGGMVNEKICPHGEEYRIRISGTKLREIIKKGITPPEYMMRPEVAKVILSFKDPFVH.

This sequence belongs to the sulfate adenylyltransferase family.

The catalysed reaction is sulfate + ATP + H(+) = adenosine 5'-phosphosulfate + diphosphate. The protein operates within sulfur metabolism; hydrogen sulfide biosynthesis; sulfite from sulfate: step 1/3. In Staphylothermus marinus (strain ATCC 43588 / DSM 3639 / JCM 9404 / F1), this protein is Sulfate adenylyltransferase.